The sequence spans 669 residues: DNA ligase (669 aa).

Residues 34 to 38 (DAEYD), 83 to 84 (SL), and Glu-114 each bind NAD(+). Lys-116 serves as the catalytic N6-AMP-lysine intermediate. Residues Arg-137, Glu-171, Lys-287, and Lys-311 each contribute to the NAD(+) site. Zn(2+)-binding residues include Cys-405, Cys-408, Cys-423, and Cys-428. Residues 591–669 (NVESYFAGKT…EERFLQELNK (79 aa)) enclose the BRCT domain.

Belongs to the NAD-dependent DNA ligase family. LigA subfamily. Mg(2+) is required as a cofactor. The cofactor is Mn(2+).

It catalyses the reaction NAD(+) + (deoxyribonucleotide)n-3'-hydroxyl + 5'-phospho-(deoxyribonucleotide)m = (deoxyribonucleotide)n+m + AMP + beta-nicotinamide D-nucleotide.. Its function is as follows. DNA ligase that catalyzes the formation of phosphodiester linkages between 5'-phosphoryl and 3'-hydroxyl groups in double-stranded DNA using NAD as a coenzyme and as the energy source for the reaction. It is essential for DNA replication and repair of damaged DNA. This is DNA ligase from Bacillus cereus (strain G9842).